Reading from the N-terminus, the 165-residue chain is Polcalcin Cup a 4 (165 aa).

EF-hand domains lie at glutamine 22–glutamate 57, valine 58–leucine 86, alanine 91–proline 126, and cysteine 127–aspartate 162. Positions 35, 37, 39, 41, 46, 71, 73, 75, 77, 82, 104, 106, 108, 110, 115, 140, 142, 144, and 151 each coordinate Ca(2+).

As to quaternary structure, may exist as monomer and dimer. Expressed in mature pollen grains.

In Hesperocyparis arizonica (Arizona cypress), this protein is Polcalcin Cup a 4.